The chain runs to 308 residues: Atrochrysone carboxyl ACP thioesterase (308 aa).

Residues H99, H101, D103, and H104 each coordinate Zn(2+). Residue D103 is the Proton donor/acceptor of the active site.

Belongs to the metallo-beta-lactamase superfamily. It depends on Zn(2+) as a cofactor.

It carries out the reaction atrochrysone carboxyl-[ACP] + H2O = atrochrysone carboxylate + holo-[ACP] + H(+). It participates in secondary metabolite biosynthesis. In terms of biological role, atrochrysone carboxyl ACP thioesterase; part of the gene cluster that mediates the biosynthesis of physcion, a natural anthraquinone fungicide that can prevent plant fungal infections. The pathway begins with the polyketide synthase AcPKS that condenses 8 malonyl-CoA units to synthesize atrochrysone thioester which is released from the synthase by the atrochrysone carboxyl ACP thioesterase AcTE that breaks the thioester bond and leads to free atrochrysone carboxylic acid. Spontaneous decarboxylation of atrochrysone carboxylic acid leads to the formation of atrochrysone. Then, atrochrysone undergoes spontaneous dehydration and oxidation, giving the products emodin anthrone and emodin. The O-methyltransferase AcOMT then methylates the C-6 hydroxyl of emodin to form physcion. This is Atrochrysone carboxyl ACP thioesterase from Aspergillus chevalieri (Eurotium chevalieri).